The sequence spans 310 residues: 2-methoxy-6-polyprenyl-1,4-benzoquinol methylase, mitochondrial (310 aa).

The N-terminal 6 residues, 1 to 6 (MAHMRS), are a transit peptide targeting the mitochondrion. Residues threonine 99, aspartate 154, and 182–183 (DA) contribute to the S-adenosyl-L-methionine site.

It belongs to the class I-like SAM-binding methyltransferase superfamily. MenG/UbiE family. In terms of assembly, component of a multi-subunit COQ enzyme complex, composed of at least coq3, coq4, coq5, coq6, coq7 and coq9.

It localises to the mitochondrion inner membrane. The catalysed reaction is a 2-methoxy-6-(all-trans-polyprenyl)benzene-1,4-diol + S-adenosyl-L-methionine = a 5-methoxy-2-methyl-3-(all-trans-polyprenyl)benzene-1,4-diol + S-adenosyl-L-homocysteine + H(+). It functions in the pathway cofactor biosynthesis; ubiquinone biosynthesis. In terms of biological role, methyltransferase required for the conversion of 2-polyprenyl-6-methoxy-1,4-benzoquinol (DDMQH2) to 2-polyprenyl-3-methyl-6-methoxy-1,4-benzoquinol (DMQH2). This Xenopus laevis (African clawed frog) protein is 2-methoxy-6-polyprenyl-1,4-benzoquinol methylase, mitochondrial.